Consider the following 208-residue polypeptide: Calaxin (208 aa).

EF-hand domains follow at residues 64-99, 100-135, and 145-180; these read TDDM…FLHG, TLEE…SLLK, and GVKD…ENLL. 13 residues coordinate Ca(2+): aspartate 77, aspartate 79, aspartate 81, aspartate 113, asparagine 115, aspartate 117, tyrosine 119, glutamate 124, aspartate 158, aspartate 160, aspartate 162, lysine 164, and aspartate 169.

In terms of assembly, component of the outer dynein arm-docking complex along with ODAD1, ODAD2, ODAD3 and ODAD4.

The protein localises to the cytoplasm. It localises to the cytoskeleton. It is found in the cilium axoneme. The protein resides in the cell projection. Its subcellular location is the cilium. The protein localises to the flagellum. Its function is as follows. Component of the outer dynein arm-docking complex (ODA-DC) that mediates outer dynein arms (ODA) binding onto the doublet microtubule. Seems to regulate the assembly of both ODAs and their axonemal docking complex onto ciliary microtubules. Regulates ciliary and flagellar motility and is required for cilia-driven determination of body laterality. The polypeptide is Calaxin (clxn) (Xenopus laevis (African clawed frog)).